A 149-amino-acid polypeptide reads, in one-letter code: MGLEKSLILFPLLVLVLGWVQPSLARESPAMKFERQHMDSDGASSSSSTYCNQMMKRREMTKESCKPVNTFVHEPLADVQAVCSQENVTCKNGKQNCYKSTSALHITDCRLKDNSKYPNCDYKTSQYQKHIIVACEGNPYVPVHFDATV.

The N-terminal stretch at 1–25 is a signal peptide; it reads MGLEKSLILFPLLVLVLGWVQPSLA. Residues Lys32 and Arg35 each coordinate substrate. His37 acts as the Proton acceptor in catalysis. 4 cysteine pairs are disulfide-bonded: Cys51/Cys109, Cys65/Cys120, Cys83/Cys135, and Cys90/Cys97. Substrate is bound by residues 66-70, Lys91, and Arg110; that span reads KPVNT. His144 serves as the catalytic Proton donor.

It belongs to the pancreatic ribonuclease family. As to quaternary structure, monomer. Interacts with and forms tight 1:1 complexes with RNH1. Dimerization of two such complexes may occur. Interaction with RNH1 inhibits this protein. As to expression, pancreas.

The protein localises to the secreted. The enzyme catalyses an [RNA] containing cytidine + H2O = an [RNA]-3'-cytidine-3'-phosphate + a 5'-hydroxy-ribonucleotide-3'-[RNA].. It carries out the reaction an [RNA] containing uridine + H2O = an [RNA]-3'-uridine-3'-phosphate + a 5'-hydroxy-ribonucleotide-3'-[RNA].. Its function is as follows. Endonuclease that catalyzes the cleavage of RNA on the 3' side of pyrimidine nucleotides. Acts on single-stranded and double-stranded RNA. This is Ribonuclease pancreatic (RNASE1) from Uranomys ruddi (White-bellied brush-furred rat).